Reading from the N-terminus, the 291-residue chain is Acetyl-coenzyme A carboxylase carboxyl transferase subunit beta (291 aa).

The CoA carboxyltransferase N-terminal domain occupies 29 to 291 (LWSKCPECGE…MHQQPAAVSA (263 aa)). Zn(2+) contacts are provided by C33, C36, C52, and C55. A C4-type zinc finger spans residues 33 to 55 (CPECGEVVYRKDLIANASVCASC).

It belongs to the AccD/PCCB family. As to quaternary structure, acetyl-CoA carboxylase is a heterohexamer composed of biotin carboxyl carrier protein (AccB), biotin carboxylase (AccC) and two subunits each of ACCase subunit alpha (AccA) and ACCase subunit beta (AccD). Requires Zn(2+) as cofactor.

Its subcellular location is the cytoplasm. It catalyses the reaction N(6)-carboxybiotinyl-L-lysyl-[protein] + acetyl-CoA = N(6)-biotinyl-L-lysyl-[protein] + malonyl-CoA. It participates in lipid metabolism; malonyl-CoA biosynthesis; malonyl-CoA from acetyl-CoA: step 1/1. Its function is as follows. Component of the acetyl coenzyme A carboxylase (ACC) complex. Biotin carboxylase (BC) catalyzes the carboxylation of biotin on its carrier protein (BCCP) and then the CO(2) group is transferred by the transcarboxylase to acetyl-CoA to form malonyl-CoA. The sequence is that of Acetyl-coenzyme A carboxylase carboxyl transferase subunit beta from Synechococcus sp. (strain RCC307).